The chain runs to 536 residues: 1,4-beta-D-glucan cellobiohydrolase B (536 aa).

The first 21 residues, Met1–Ala21, serve as a signal peptide directing secretion. Positions Gln22–Ser458 are catalytic. Glu233 (nucleophile) is an active-site residue. Glu238 (proton donor) is an active-site residue. 2 N-linked (GlcNAc...) asparagine glycosylation sites follow: Asn351 and Asn414. The segment at Thr459 to Ser500 is ser/Thr-rich linker. Positions Ser464–Thr499 are disordered. Residues Ser500 to Leu536 form the CBM1 domain. Intrachain disulfides connect Cys508–Cys525 and Cys519–Cys535.

Belongs to the glycosyl hydrolase 7 (cellulase C) family.

The protein resides in the secreted. The catalysed reaction is Hydrolysis of (1-&gt;4)-beta-D-glucosidic linkages in cellulose and cellotetraose, releasing cellobiose from the non-reducing ends of the chains.. Functionally, the biological conversion of cellulose to glucose generally requires three types of hydrolytic enzymes: (1) Endoglucanases which cut internal beta-1,4-glucosidic bonds; (2) Exocellobiohydrolases that cut the disaccharide cellobiose from the non-reducing end of the cellulose polymer chain; (3) Beta-1,4-glucosidases which hydrolyze the cellobiose and other short cello-oligosaccharides to glucose. The chain is 1,4-beta-D-glucan cellobiohydrolase B (cbhB) from Aspergillus niger.